A 196-amino-acid polypeptide reads, in one-letter code: ATP-dependent Clp protease proteolytic subunit (196 aa).

The active-site Nucleophile is Ser97. His122 is an active-site residue.

This sequence belongs to the peptidase S14 family. As to quaternary structure, fourteen ClpP subunits assemble into 2 heptameric rings which stack back to back to give a disk-like structure with a central cavity, resembling the structure of eukaryotic proteasomes.

Its subcellular location is the cytoplasm. The enzyme catalyses Hydrolysis of proteins to small peptides in the presence of ATP and magnesium. alpha-casein is the usual test substrate. In the absence of ATP, only oligopeptides shorter than five residues are hydrolyzed (such as succinyl-Leu-Tyr-|-NHMec, and Leu-Tyr-Leu-|-Tyr-Trp, in which cleavage of the -Tyr-|-Leu- and -Tyr-|-Trp bonds also occurs).. In terms of biological role, cleaves peptides in various proteins in a process that requires ATP hydrolysis. Has a chymotrypsin-like activity. Plays a major role in the degradation of misfolded proteins. This is ATP-dependent Clp protease proteolytic subunit from Lacticaseibacillus paracasei (strain ATCC 334 / BCRC 17002 / CCUG 31169 / CIP 107868 / KCTC 3260 / NRRL B-441) (Lactobacillus paracasei).